The following is a 1663-amino-acid chain: Complement C3 (1663 aa).

The first 22 residues, 1 to 22 (MGPTSGPSLLLLLLTHLPLALG), serve as a signal peptide directing secretion. A phosphoserine; by FAM20C mark is found at Ser-38 and Ser-70. A glycan (N-linked (GlcNAc...) asparagine) is linked at Asn-85. Phosphoserine; by FAM20C occurs at positions 297 and 303. Disulfide bonds link Cys-559–Cys-816, Cys-627–Cys-662, Cys-693–Cys-720, Cys-694–Cys-727, Cys-707–Cys-728, Cys-873–Cys-1513, Cys-1101–Cys-1158, Cys-1358–Cys-1489, Cys-1389–Cys-1458, Cys-1506–Cys-1511, Cys-1518–Cys-1590, Cys-1537–Cys-1661, and Cys-1637–Cys-1646. At Ser-672 the chain carries Phosphoserine; by FAM20C. The region spanning 693 to 728 (CCEDGMRENPMRFSCQRRTRFISLGEACKKVFLDCC) is the Anaphylatoxin-like domain. Residue Asn-939 is glycosylated (N-linked (GlcNAc...) asparagine). The disordered stretch occupies residues 954–973 (REGVQKEDIPPADLSDQVPD). Ser-968 carries the phosphoserine; by FAM20C modification. Positions 1010–1013 (CGEQ) form a cross-link, isoglutamyl cysteine thioester (Cys-Gln). Ser-1321 carries the post-translational modification Phosphoserine; by FAM20C. Positions 1518-1661 (CFIQKSDDKV…FTESMVVFGC (144 aa)) constitute an NTR domain. The residue at position 1573 (Ser-1573) is a Phosphoserine; by FAM20C. Residue Asn-1617 is glycosylated (N-linked (GlcNAc...) asparagine). The interval 1634-1659 (EDECQDEENQKQCQDLGAFTESMVVF) is interaction with CFP/properdin.

In terms of assembly, in absence of complement activation, the C3 precursor is first processed by the removal of 4 Arg residues, forming two chains, beta and alpha, linked by a disulfide bond. Complement C3b is composed of complement C3b and complement C3 beta chains that are associated via disulfide bonds. Non-enzymatic component of the C5 convertase, also named C4bC2bC3b, composed of the serine protease complement C2b (C2), complement C3b, as well as complement C4b (C4). Non-enzymatic component of the C5 convertase of the alternative complement pathways composed of the serine protease complement CFB and complement C3b. Interacts with CFP; interaction takes place together with CFB in the alternative complement system and allows the complex to become active. Interacts with CR1 (via Sushi 8 and Sushi 9 domains). Interacts with CFH. As to quaternary structure, interacts with CFH. Interacts with CR2. In terms of assembly, during pregnancy, C3dg exists as a complex (probably a 2:2:2 heterohexamer) with AGT and the proform of PRG2. Interacts with CR2 (via the N-terminal Sushi domains 1 and 2). (Microbial infection) C3b interacts with herpes simplex virus 1 (HHV-1) and herpes simplex virus 2 (HHV-2) envelope glycoprotein C; this interaction inhibits the activation of the complement system. As to quaternary structure, (Microbial infection) Interacts with Staphylococcus aureus immunoglobulin-binding protein Sbi; this interaction prevents the association between C3dg and CR2. In terms of assembly, (Microbial infection) Interacts with Staphylococcus aureus protein Fib. Post-translationally, C3 precursor is first processed by the removal of 4 Arg residues, forming two chains, beta and alpha, linked by a disulfide bond. During activation of the complement systems, the alpha chain is cleaved into C3a and C3b by the C3 convertase: C3b stays linked to the beta chain, while C3a is released in the plasma. The alpha chain is cleaved by the serine protease complement C2b component of the C3 convertase to generate C3a and C3b following activation by the classical, lectin and GZMK complement systems. The alpha chain is cleaved by CFB component of the C3 convertase to generate C3a and C3b following activation by the alternative complement system. In terms of processing, C3a is further processed by carboxypeptidases to release the C-terminal arginine residue generating the acylation stimulating protein (ASP). Levels of ASP are increased in adipocytes in the postprandial period and by insulin and dietary chylomicrons. Complement C3b is rapidly split in two positions by factor I (CFI) and a cofactor (CFH) to form iC3b (inactivated C3b) and C3f which is released. CFI and CFH catalyze proteolytic degradation of already-deposited complement C3b. Then iC3b is slowly cleaved (possibly by CFI) to form C3c (beta chain + alpha' chain fragment 1 + alpha' chain fragment 2), C3dg and C3f. Other proteases produce other fragments such as C3d or C3g. Post-translationally, upon activation, the internal thioester bond reacts with carbohydrate antigens on the target surface to form amide or ester bonds, leading to covalent association with the surface of pathogens. In terms of processing, complement C3b interacts with complement C4b via a thioester linkage. Phosphorylated by FAM20C in the extracellular medium. Post-translationally, (Microbial infection) C3 is cleaved by Staphylococcus aureus aureolysin; this cleavage renders C3a and C3b inactive. C3b is rapidly degraded by host factors CFH and CFI preventing its deposition on the bacterial surface while C3a is further inactivated by aureolysin. In terms of processing, (Microbial infection) Complement C3 beta chain is cleaved and inactivated by S.pyogenes SpeB. (Microbial infection) Cleaved by N.meningitidis NalP between Leu-744 and Gly-745, generating a slightly shorter C3 alpha form and a slightly longer C3 beta form. The C3b-like fragment is degraded in the presence of the complement regulators CFH and CFI, preventing its deposition on the bacterial surface. In terms of tissue distribution, plasma. As to expression, produced in adipocytes and released into the plasma during both the fasting and postprandial periods.

Its subcellular location is the secreted. It is found in the cell surface. With respect to regulation, complement activation is inhibited by VSIG4. In terms of biological role, precursor of non-enzymatic components of the classical, alternative, lectin and GZMK complement pathways, which consist in a cascade of proteins that leads to phagocytosis and breakdown of pathogens and signaling that strengthens the adaptive immune system. Its function is as follows. Non-enzymatic component of C5 convertase. Generated following cleavage by C3 convertase, it covalently attaches to the surface of pathogens, where it acts as an opsonin that marks the surface of antigens for removal. Complement C3b binds covalently via its reactive thioester, to cell surface carbohydrates or immune aggregates. Together with complement C4b, it then recruits the serine protease complement C2b to form the C5 convertase, which cleaves and activate C5, the next component of the complement pathways. In the alternative complement pathway, recruits the serine protease CFB to form the C5 convertase that cleaves and activates C5. Functionally, mediator of local inflammatory process released following cleavage by C3 convertase. Acts by binding to its receptor, C3AR1, activating G protein-coupled receptor signaling, promoting the phosphorylation, ARRB2-mediated internalization and endocytosis of C3AR1. C3a anaphylatoxin stimulates the activation of immune cells such as mast cells and basophilic leukocytes to release inflammation agents, such as cytokines, chemokines and histamine, which promote inflammation development. Also acts as potent chemoattractant for the migration of macrophages and neutrophils to the inflamed tissues, resulting in neutralization of the inflammatory triggers by multiple ways, such as phagocytosis and generation of reactive oxidants. Adipogenic hormone that stimulates triglyceride synthesis and glucose transport in adipocytes, regulating fat storage and playing a role in postprandial triglyceride clearance. Appears to stimulate triglyceride synthesis via activation of the PLC, MAPK and AKT signaling pathways. Acts by binding to its receptor, C5AR2, activating G protein-coupled receptor signaling, promoting the phosphorylation, ARRB2-mediated internalization and endocytosis of C5AR2. In terms of biological role, acts as a chemoattractant for neutrophils in chronic inflammation. In Homo sapiens (Human), this protein is Complement C3.